A 289-amino-acid chain; its full sequence is Pantothenate synthetase (289 aa).

Residue 30-37 (MGNLHEGH) coordinates ATP. Catalysis depends on histidine 37, which acts as the Proton donor. Glutamine 61 serves as a coordination point for (R)-pantoate. Position 61 (glutamine 61) interacts with beta-alanine. 149–152 (GEKD) is an ATP binding site. A (R)-pantoate-binding site is contributed by glutamine 155. 186 to 189 (MSSR) lines the ATP pocket.

This sequence belongs to the pantothenate synthetase family. Homodimer.

The protein localises to the cytoplasm. It catalyses the reaction (R)-pantoate + beta-alanine + ATP = (R)-pantothenate + AMP + diphosphate + H(+). The protein operates within cofactor biosynthesis; (R)-pantothenate biosynthesis; (R)-pantothenate from (R)-pantoate and beta-alanine: step 1/1. Functionally, catalyzes the condensation of pantoate with beta-alanine in an ATP-dependent reaction via a pantoyl-adenylate intermediate. This is Pantothenate synthetase from Psychromonas ingrahamii (strain DSM 17664 / CCUG 51855 / 37).